A 185-amino-acid chain; its full sequence is Adenylate kinase (185 aa).

An ATP-binding site is contributed by 8 to 16 (GIPGSGSTT).

It belongs to the archaeal adenylate kinase family.

Its subcellular location is the cytoplasm. It carries out the reaction AMP + ATP = 2 ADP. The protein is Adenylate kinase (adkA) of Methanothermobacter thermautotrophicus (strain ATCC 29096 / DSM 1053 / JCM 10044 / NBRC 100330 / Delta H) (Methanobacterium thermoautotrophicum).